An 850-amino-acid polypeptide reads, in one-letter code: MLLVRTTSLNVSRMPVPCLARGIGILKGKYRLANLMNAQPSVRHVSSEIQQKDQQAGESNTATDTGVIHKSDEETLIYFDNVYARTTSVWNPTLWYNLLLRNQSRDAVREKIRNLASPPNNPIYGLELKSTIPVKRDGGVFATFVVPPKYTKAQVNSLIQQNTARESSKNLLSYFTRASAFPVKGSPWIEDLRRLPSTTIVIKFQGPALTEEEIYSLFRRYGTIIDIFPPTAANNNVAKVRYRSFRGAISAKNCVSGIEIHNTVLHIQYENIRRGHLVSNFFTNHTRIAIPVLFALLSIFAVLVFDPIREFSIEQKITHKYSLSWDNKFWKQLKTLTSSTMTSIKYYWGGPDDNHQRKHLWEERIEKVNDLKMWLEENNNTFVVIRGPRGSGKHDLVMQHTLQNRANVLYLDCDKLIKSRTDPMFLKNAASQLGYFPIFPWIDSVTGVLDLTVQGLTGQKTGLSETKESRFRNMLTTSLMSIRRIALKNYKAFVSTGDGTVNVKEEDYLQQHPEAKPVIVIDRFEGKSEINGFVYKELSDWAAMLVQMNIAHVIFLTETVASNQRLSESLPNQVFKNLILSDASKENSRNYVLSQLEDYLYYNKKSKGENVKEPESEKETAENNDSDSEADTSVKKAEVILNEKELQEIDASLEPLGGRMLDLQAFVRRVKSGEEPSEAVDKMIEQASEQITQMFLSDKIDSNKSAQAWELIELLSANPVIPFHEIVNKPLFKAAPETGIMELENNGLITVSRDRGVLQEIRPAKPLYRAAFTYLINDPELAKVLKTRYLLKVVGFETGRIKKWEEELKPLGKVPDQKLFKTRLDYLSGKINASNAVITKCEEEIKNLSK.

The transit peptide at 1 to 44 (MLLVRTTSLNVSRMPVPCLARGIGILKGKYRLANLMNAQPSVRH) directs the protein to the mitochondrion. A disordered region spans residues 44–66 (HVSSEIQQKDQQAGESNTATDTG). Topologically, residues 45–287 (VSSEIQQKDQ…VSNFFTNHTR (243 aa)) are mitochondrial matrix. Residues 47–64 (SEIQQKDQQAGESNTATD) are compositionally biased toward polar residues. Residues 198–272 (TTIVIKFQGP…TVLHIQYENI (75 aa)) form the RRM domain. Residues 288–308 (IAIPVLFALLSIFAVLVFDPI) traverse the membrane as a helical segment. Residues 309-850 (REFSIEQKIT…CEEEIKNLSK (542 aa)) lie on the Mitochondrial intermembrane side of the membrane. Residues 607–621 (KGENVKEPESEKETA) show a composition bias toward basic and acidic residues. Residues 607 to 633 (KGENVKEPESEKETAENNDSDSEADTS) form a disordered region.

Belongs to the YME2 family.

It localises to the mitochondrion inner membrane. Functionally, plays a role in maintaining the mitochondrial genome and in controlling the mtDNA escape. Involved in the regulation of mtDNA nucleotide structure and number. May have a dispensable role in early maturation of pre-rRNA. In Saccharomyces cerevisiae (strain ATCC 204508 / S288c) (Baker's yeast), this protein is Mitochondrial escape protein 2 (YME2).